Reading from the N-terminus, the 404-residue chain is Argininosuccinate synthase (404 aa).

ATP contacts are provided by residues 10–18 (AYSGGLDTS) and alanine 37. L-citrulline-binding residues include tyrosine 90 and serine 95. Position 120 (glycine 120) interacts with ATP. Threonine 122, asparagine 126, and aspartate 127 together coordinate L-aspartate. Residue asparagine 126 participates in L-citrulline binding. L-citrulline contacts are provided by arginine 130, serine 180, serine 189, glutamate 265, and tyrosine 277.

It belongs to the argininosuccinate synthase family. Type 1 subfamily. As to quaternary structure, homotetramer.

The protein resides in the cytoplasm. The enzyme catalyses L-citrulline + L-aspartate + ATP = 2-(N(omega)-L-arginino)succinate + AMP + diphosphate + H(+). It functions in the pathway amino-acid biosynthesis; L-arginine biosynthesis; L-arginine from L-ornithine and carbamoyl phosphate: step 2/3. The polypeptide is Argininosuccinate synthase (Helicobacter hepaticus (strain ATCC 51449 / 3B1)).